The primary structure comprises 874 residues: Valine--tRNA ligase (874 aa).

Positions 42–52 (PNITGRIHIGH) match the 'HIGH' region motif. The 'KMSKS' region motif lies at 522–526 (KMSKS). K525 serves as a coordination point for ATP. The stretch at 806–874 (DYIDIDTEKQ…KLQALLKEIS (69 aa)) forms a coiled coil.

This sequence belongs to the class-I aminoacyl-tRNA synthetase family. ValS type 1 subfamily. In terms of assembly, monomer.

The protein resides in the cytoplasm. It catalyses the reaction tRNA(Val) + L-valine + ATP = L-valyl-tRNA(Val) + AMP + diphosphate. Catalyzes the attachment of valine to tRNA(Val). As ValRS can inadvertently accommodate and process structurally similar amino acids such as threonine, to avoid such errors, it has a 'posttransfer' editing activity that hydrolyzes mischarged Thr-tRNA(Val) in a tRNA-dependent manner. The chain is Valine--tRNA ligase from Petrotoga mobilis (strain DSM 10674 / SJ95).